The chain runs to 389 residues: MGQNLSTSNPLGFFPDHQLDPASRANTANPDWDFNPNKDTWPDANKDGAGAFGLGLTPPHGGLLGWSPQAQGILHTVPANPPPASTNRQTGRQPTPLSPPLRDTHPQAVQWNSTTFHQTLQDPRVRGLYFPAGGSSSGTVNPVPTTASPLSSIFSRIGDPVTNMENITSGFLGPLLVLQAGFFLLTRILTIPQSLDSWWTSLNFRGGTTVCLGQNSQSPTSNHSPTSCPPTCPGYRWMCLRGFIIFLFILLLCLIFLLVLLEYQGMLHVCPLIPGTTTTSTGPCKTCTTPAQGNSMFPSCCCTKTSDGNCTCIPIPSSWAFAKYLWEWASVRFSWLSLLVPFVQWFVGLSPTVWLSAIWMMWYWGPSLYSILSPFLPLLPIFFCLWVYI.

2 stretches are compositionally biased toward polar residues: residues 1–10 (MGQNLSTSNP) and 85–95 (STNRQTGRQPT). 2 disordered regions span residues 1-54 (MGQN…AFGL) and 73-106 (ILHTVPANPPPASTNRQTGRQPTPLSPPLRDTHP). Gly2 carries the N-myristoyl glycine; by host lipid modification. Residues 2–108 (GQNLSTSNPL…PPLRDTHPQA (107 aa)) are pre-S1. Residues 2–163 (GQNLSTSNPL…FSRIGDPVTN (162 aa)) form a pre-S region. The Virion surface; in external conformation portion of the chain corresponds to 2–170 (GQNLSTSNPL…VTNMENITSG (169 aa)). Residues 2–242 (GQNLSTSNPL…PGYRWMCLRG (241 aa)) are Intravirion; in internal conformation-facing. The interval 109 to 163 (VQWNSTTFHQTLQDPRVRGLYFPAGGSSSGTVNPVPTTASPLSSIFSRIGDPVTN) is pre-S2. Residues 171 to 191 (FLGPLLVLQAGFFLLTRILTI) traverse the membrane as a helical segment. Residues 192–242 (PQSLDSWWTSLNFRGGTTVCLGQNSQSPTSNHSPTSCPPTCPGYRWMCLRG) are Intravirion; in external conformation-facing. A helical membrane pass occupies residues 243–263 (FIIFLFILLLCLIFLLVLLEY). Over 264 to 337 (QGMLHVCPLI…WASVRFSWLS (74 aa)) the chain is Virion surface. N-linked (GlcNAc...) asparagine; by host glycosylation is present at Asn309. Residues 338-358 (LLVPFVQWFVGLSPTVWLSAI) form a helical membrane-spanning segment. At 359-364 (WMMWYW) the chain is on the intravirion side. A helical transmembrane segment spans residues 365 to 387 (GPSLYSILSPFLPLLPIFFCLWV). Topologically, residues 388-389 (YI) are virion surface.

It belongs to the orthohepadnavirus major surface antigen family. In terms of assembly, li-HBsAg interacts with capsid protein and with HDV Large delta antigen. Isoform M associates with host chaperone CANX through its pre-S2 N glycan. This association may be essential for M proper secretion. Post-translationally, isoform M is N-terminally acetylated by host at a ratio of 90%, and N-glycosylated by host at the pre-S2 region. In terms of processing, myristoylated.

It is found in the virion membrane. In terms of biological role, the large envelope protein exists in two topological conformations, one which is termed 'external' or Le-HBsAg and the other 'internal' or Li-HBsAg. In its external conformation the protein attaches the virus to cell receptors and thereby initiating infection. This interaction determines the species specificity and liver tropism. This attachment induces virion internalization predominantly through caveolin-mediated endocytosis. The large envelope protein also assures fusion between virion membrane and endosomal membrane. In its internal conformation the protein plays a role in virion morphogenesis and mediates the contact with the nucleocapsid like a matrix protein. The middle envelope protein plays an important role in the budding of the virion. It is involved in the induction of budding in a nucleocapsid independent way. In this process the majority of envelope proteins bud to form subviral lipoprotein particles of 22 nm of diameter that do not contain a nucleocapsid. This Homo sapiens (Human) protein is Large envelope protein.